An 87-amino-acid chain; its full sequence is Large ribosomal subunit protein bL31B (87 aa).

It belongs to the bacterial ribosomal protein bL31 family. Type B subfamily. Part of the 50S ribosomal subunit.

The polypeptide is Large ribosomal subunit protein bL31B (Ralstonia nicotianae (strain ATCC BAA-1114 / GMI1000) (Ralstonia solanacearum)).